We begin with the raw amino-acid sequence, 143 residues long: Large ribosomal subunit protein uL11 (143 aa).

Belongs to the universal ribosomal protein uL11 family. In terms of assembly, part of the ribosomal stalk of the 50S ribosomal subunit. Interacts with L10 and the large rRNA to form the base of the stalk. L10 forms an elongated spine to which L12 dimers bind in a sequential fashion forming a multimeric L10(L12)X complex. In terms of processing, one or more lysine residues are methylated.

Its function is as follows. Forms part of the ribosomal stalk which helps the ribosome interact with GTP-bound translation factors. The chain is Large ribosomal subunit protein uL11 from Pseudomonas fluorescens (strain Pf0-1).